A 196-amino-acid polypeptide reads, in one-letter code: Holliday junction branch migration complex subunit RuvA (196 aa).

The interval 1-61 (MYEYFEGIVT…DTGITLYGFQ (61 aa)) is domain I. Residues 62–140 (SEDDKGLFLK…DYVARLDRQD (79 aa)) are domain II. Residues 141 to 149 (EEQGNISPA) form a flexible linker region. The tract at residues 149–196 (ALNDALLALIALGYTQKEVDRITTKLEEVNADTADQYIKKGLALLLKK) is domain III.

It belongs to the RuvA family. As to quaternary structure, homotetramer. Forms an RuvA(8)-RuvB(12)-Holliday junction (HJ) complex. HJ DNA is sandwiched between 2 RuvA tetramers; dsDNA enters through RuvA and exits via RuvB. An RuvB hexamer assembles on each DNA strand where it exits the tetramer. Each RuvB hexamer is contacted by two RuvA subunits (via domain III) on 2 adjacent RuvB subunits; this complex drives branch migration. In the full resolvosome a probable DNA-RuvA(4)-RuvB(12)-RuvC(2) complex forms which resolves the HJ.

The protein localises to the cytoplasm. In terms of biological role, the RuvA-RuvB-RuvC complex processes Holliday junction (HJ) DNA during genetic recombination and DNA repair, while the RuvA-RuvB complex plays an important role in the rescue of blocked DNA replication forks via replication fork reversal (RFR). RuvA specifically binds to HJ cruciform DNA, conferring on it an open structure. The RuvB hexamer acts as an ATP-dependent pump, pulling dsDNA into and through the RuvAB complex. HJ branch migration allows RuvC to scan DNA until it finds its consensus sequence, where it cleaves and resolves the cruciform DNA. The protein is Holliday junction branch migration complex subunit RuvA of Lactobacillus helveticus (strain DPC 4571).